We begin with the raw amino-acid sequence, 348 residues long: MSKQTLVLLYGGRSAEREVSVLSAESVMRAVNYDKFLVKTYFITQMGQFIRTQQFSEKPSESERLMTNETIELTQKIKPSDIYEEGAVVFPVLHGPMGEDGSIQGFLEVLRMPYIGTNVMSSSIAMDKITTKRVLESIGIPQVAYTVYIDGQDLEACLVETLARLTFPIFVKPANMGSSVGISKAQTKVELRKAIQLALTYDSRVLIEQGVVAREIEVGLLGNDKVKSTLPGEVIKDVDFYDYQAKYVDNKITMAIPADVDQSIVTEMRSYAEVAFKALGGCGLSRCDFFLTQDGQVYLNELNTMPGFTQWSMYPLLWENMGLAYPDLIEELVTLAQEMFDQRESHLI.

Residues 132–334 (KRVLESIGIP…YPDLIEELVT (203 aa)) enclose the ATP-grasp domain. An ATP-binding site is contributed by 162–217 (LARLTFPIFVKPANMGSSVGISKAQTKVELRKAIQLALTYDSRVLIEQGVVAREIE). Mg(2+) contacts are provided by aspartate 288, glutamate 301, and asparagine 303.

It belongs to the D-alanine--D-alanine ligase family. Requires Mg(2+) as cofactor. The cofactor is Mn(2+).

The protein localises to the cytoplasm. It carries out the reaction 2 D-alanine + ATP = D-alanyl-D-alanine + ADP + phosphate + H(+). It functions in the pathway cell wall biogenesis; peptidoglycan biosynthesis. Cell wall formation. This chain is D-alanine--D-alanine ligase, found in Streptococcus pyogenes serotype M18 (strain MGAS8232).